Consider the following 48-residue polypeptide: Hemoglobin subunit beta-B (48 aa).

Residues 2–48 enclose the Globin domain; it reads EWTDAERGAILSLWGKIDPDELGPALLARXXLVYXXTQRYFASFGDL.

It belongs to the globin family. As to quaternary structure, heterotetramer of two alpha chains and two beta chains. Red blood cells.

Involved in oxygen transport from gills to the various peripheral tissues. In Catostomus clarkii (Desert sucker), this protein is Hemoglobin subunit beta-B.